The primary structure comprises 109 residues: Putative membrane protein insertion efficiency factor (109 aa).

It belongs to the UPF0161 family.

Its subcellular location is the cell inner membrane. Functionally, could be involved in insertion of integral membrane proteins into the membrane. This is Putative membrane protein insertion efficiency factor from Rhodopseudomonas palustris (strain BisA53).